Consider the following 239-residue polypeptide: Small ribosomal subunit protein eS6A (239 aa).

Serine 235 and serine 236 each carry phosphoserine.

It belongs to the eukaryotic ribosomal protein eS6 family. As to quaternary structure, component of the small ribosomal subunit (SSU). Mature yeast ribosomes consist of a small (40S) and a large (60S) subunit. The 40S small subunit contains 1 molecule of ribosomal RNA (18S rRNA) and at least 33 different proteins. The large 60S subunit contains 3 rRNA molecules (25S, 5.8S and 5S rRNA) and at least 46 different proteins. Interacts with snoRNA U3. uS11 interacts with MPP10. Component of the ribosomal small subunit (SSU) processome composed of at least 40 protein subunits and snoRNA U3. Post-translationally, phosphorylated.

The protein localises to the cytoplasm. Its function is as follows. Component of the ribosome, a large ribonucleoprotein complex responsible for the synthesis of proteins in the cell. The small ribosomal subunit (SSU) binds messenger RNAs (mRNAs) and translates the encoded message by selecting cognate aminoacyl-transfer RNA (tRNA) molecules. The large subunit (LSU) contains the ribosomal catalytic site termed the peptidyl transferase center (PTC), which catalyzes the formation of peptide bonds, thereby polymerizing the amino acids delivered by tRNAs into a polypeptide chain. The nascent polypeptides leave the ribosome through a tunnel in the LSU and interact with protein factors that function in enzymatic processing, targeting, and the membrane insertion of nascent chains at the exit of the ribosomal tunnel. eS6 is involved in nucleolar processing of pre-18S ribosomal RNA and ribosome assembly. The protein is Small ribosomal subunit protein eS6A (rps601) of Schizosaccharomyces pombe (strain 972 / ATCC 24843) (Fission yeast).